Consider the following 91-residue polypeptide: Acylphosphatase (91 aa).

Positions Q3 to Y90 constitute an Acylphosphatase-like domain. Active-site residues include R18 and N36.

The protein belongs to the acylphosphatase family.

The enzyme catalyses an acyl phosphate + H2O = a carboxylate + phosphate + H(+). This chain is Acylphosphatase (acyP), found in Bacillus subtilis (strain 168).